The following is a 327-amino-acid chain: Dolichyl-phosphate beta-glucosyltransferase ALG5D (327 aa).

The Lumenal portion of the chain corresponds to 1-6 (MEKQLA). The chain crosses the membrane as a helical span at residues 7-27 (ELSVYILIIFLILGFIMAILM). Topologically, residues 28–327 (RFGDDTTLFD…NIWTIRDRKF (300 aa)) are cytoplasmic.

It belongs to the glycosyltransferase 2 family.

The protein localises to the endoplasmic reticulum membrane. It carries out the reaction a di-trans,poly-cis-dolichyl phosphate + UDP-alpha-D-glucose = a di-trans,poly-cis-dolichyl beta-D-glucosyl phosphate + UDP. Its pathway is protein modification; protein glycosylation. Its function is as follows. Dolichyl-phosphate beta-glucosyltransferase involved in the glycosylation of glycoproteins through the synthesis of dolichyl beta-D-glucosyl phosphate which serves as a sugar donor for transfer of three glucose residues to the Man-9-GlcNAc-2-PP-dolichol precursor to N-glycans. This Trichomonas vaginalis (strain ATCC PRA-98 / G3) protein is Dolichyl-phosphate beta-glucosyltransferase ALG5D.